The following is a 449-amino-acid chain: MTDPERTIAAQATAAGQGAIAVIRMSGPGCMDILKQCTPAAFTERLRPRRATLVCIRDAEGAAIDQALVTWFPAPASYTGEDTAEISCHGGMLVTDRLLKRLYQCGASPAEPGEFTKRAFLNGRMDLTQAEAVMDVISAGSDLALKAAQSQLDGGIGAQVDELKDNLVHVLAHIEAYIDFPDEDISPDTASDLLARLRNMEEKLDTLLKTAEGGRLLREGIRTAIAGPPNVGKSSLLNTLLGYDRAIVSNIAGTTRDTVEESIQLAGLALRLIDTAGVRESSDVIEQAGITRTNRALETADLVLEVADASTPRVKDFPAPVLTAPRLLILNKCDLGIHPDWKAVPGIRFSCATGEGRKELEEAIIQAFSSSLPGETGSSLVAINARHQHELGLCREHVRLASESISRQESPEFTALELREALTHLGEITGAVDTEDVLGAIFSSFCLGK.

The (6S)-5-formyl-5,6,7,8-tetrahydrofolate site is built by R24, E85, and R124. One can recognise a TrmE-type G domain in the interval G220–S369. N230 serves as a coordination point for K(+). GTP contacts are provided by residues N230–S235, S249–T255, and D274–G277. Residue S234 coordinates Mg(2+). K(+) contacts are provided by S249, I251, and T254. T255 contacts Mg(2+). K449 serves as a coordination point for (6S)-5-formyl-5,6,7,8-tetrahydrofolate.

This sequence belongs to the TRAFAC class TrmE-Era-EngA-EngB-Septin-like GTPase superfamily. TrmE GTPase family. In terms of assembly, homodimer. Heterotetramer of two MnmE and two MnmG subunits. K(+) serves as cofactor.

Its subcellular location is the cytoplasm. In terms of biological role, exhibits a very high intrinsic GTPase hydrolysis rate. Involved in the addition of a carboxymethylaminomethyl (cmnm) group at the wobble position (U34) of certain tRNAs, forming tRNA-cmnm(5)s(2)U34. This chain is tRNA modification GTPase MnmE, found in Akkermansia muciniphila (strain ATCC BAA-835 / DSM 22959 / JCM 33894 / BCRC 81048 / CCUG 64013 / CIP 107961 / Muc).